The sequence spans 279 residues: Eukaryotic translation initiation factor 3 subunit G (279 aa).

Disordered stretches follow at residues 69 to 90 and 149 to 193; these read AKYG…QLGE and LNGG…EARD. Residue Ser77 is modified to Phosphoserine. Residues 196–275 form the RRM domain; it reads TTLKVSQLNT…LILHLEWSKK (80 aa).

Belongs to the eIF-3 subunit G family. Component of the eukaryotic translation initiation factor 3 (eIF-3) complex.

It localises to the cytoplasm. Its function is as follows. RNA-binding component of the eukaryotic translation initiation factor 3 (eIF-3) complex, which is involved in protein synthesis of a specialized repertoire of mRNAs and, together with other initiation factors, stimulates binding of mRNA and methionyl-tRNAi to the 40S ribosome. The eIF-3 complex specifically targets and initiates translation of a subset of mRNAs involved in cell proliferation. This subunit can bind 18S rRNA. The sequence is that of Eukaryotic translation initiation factor 3 subunit G from Lodderomyces elongisporus (strain ATCC 11503 / CBS 2605 / JCM 1781 / NBRC 1676 / NRRL YB-4239) (Yeast).